The chain runs to 368 residues: Mitogen-activated protein kinase HOG1B (368 aa).

A Protein kinase domain is found at 20–299; sequence YVNLEPVGMG…ASQALAHPYL (280 aa). ATP is bound by residues 26 to 34 and lysine 49; that span reads VGMGAFGLV. Aspartate 141 (proton acceptor) is an active-site residue. Position 171 is a phosphothreonine (threonine 171). The TXY signature appears at 171–173; the sequence is TGY. Tyrosine 173 carries the phosphotyrosine modification.

The protein belongs to the protein kinase superfamily. Ser/Thr protein kinase family. MAP kinase subfamily. HOG1 sub-subfamily. Requires Mg(2+) as cofactor. In terms of processing, phosphorylated. Dually phosphorylated on Thr-171 and Tyr-173, which activates the enzyme. Rapidly dephosphorylated upon either hypo- or hyperosmotic shock.

The protein localises to the cytoplasm. The protein resides in the nucleus. The enzyme catalyses L-seryl-[protein] + ATP = O-phospho-L-seryl-[protein] + ADP + H(+). The catalysed reaction is L-threonyl-[protein] + ATP = O-phospho-L-threonyl-[protein] + ADP + H(+). Its activity is regulated as follows. Activated by tyrosine and threonine phosphorylation. In terms of biological role, mitogen-activated protein kinase involved in a signal transduction pathway that is activated by changes in the osmolarity of the extracellular environment. Controls osmotic regulation of transcription of target genes. This is Mitogen-activated protein kinase HOG1B (HOG1B) from Wallemia ichthyophaga (strain EXF-994 / CBS 113033).